The following is a 453-amino-acid chain: TATA box-binding protein-associated factor RNA polymerase I subunit A (453 aa).

Component of the transcription factor SL1/TIF-IB complex, composed of TBP and at least TAF1A, TAF1B, TAF1C and TAF1D. In the complex interacts directly with TBP, TAF1A and TAF1B. Interaction of the SL1/TIF-IB subunits with TBP excludes interaction of TBP with the transcription factor IID (TFIID) subunits. Interacts with UBFT. Interacts with CEBPA (isoform 1 and isoform 4). Part of Pol I pre-initiation complex (PIC), in which Pol I core assembles with RRN3 and promoter-bound UTBF and SL1/TIF-IB complex.

The protein resides in the nucleus. Its subcellular location is the nucleolus. In terms of biological role, component of the transcription factor SL1/TIF-IB complex, which is involved in the assembly of the PIC (pre-initiation complex) during RNA polymerase I-dependent transcription. The rate of PIC formation probably is primarily dependent on the rate of association of SL1/TIF-IB with the rDNA promoter. SL1/TIF-IB is involved in stabilization of nucleolar transcription factor 1/UBTF on rDNA. Formation of SL1/TIF-IB excludes the association of TBP with TFIID subunits. This chain is TATA box-binding protein-associated factor RNA polymerase I subunit A (Taf1a), found in Mus musculus (Mouse).